The following is a 427-amino-acid chain: Glutamyl-tRNA reductase (427 aa).

Substrate is bound by residues 49-52 (TCNR), Ser105, 110-112 (EPQ), and Gln116. Cys50 (nucleophile) is an active-site residue. 185–190 (AAGEMN) provides a ligand contact to NADP(+).

It belongs to the glutamyl-tRNA reductase family. In terms of assembly, homodimer.

It catalyses the reaction (S)-4-amino-5-oxopentanoate + tRNA(Glu) + NADP(+) = L-glutamyl-tRNA(Glu) + NADPH + H(+). It participates in porphyrin-containing compound metabolism; protoporphyrin-IX biosynthesis; 5-aminolevulinate from L-glutamyl-tRNA(Glu): step 1/2. Its function is as follows. Catalyzes the NADPH-dependent reduction of glutamyl-tRNA(Glu) to glutamate 1-semialdehyde (GSA). This is Glutamyl-tRNA reductase from Acinetobacter baumannii (strain AB307-0294).